The following is a 346-amino-acid chain: Phosphate-binding protein PstS (346 aa).

The first 25 residues, Met-1–Ala-25, serve as a signal peptide directing secretion. Phosphate-binding positions include Ala-34–Phe-36, Ser-63, Asp-81, and Ser-164–Thr-166.

It belongs to the PstS family. As to quaternary structure, the complex is composed of two ATP-binding proteins (PstB), two transmembrane proteins (PstC and PstA) and a solute-binding protein (PstS).

The protein resides in the periplasm. In terms of biological role, part of the ABC transporter complex PstSACB involved in phosphate import. The chain is Phosphate-binding protein PstS (pstS) from Escherichia coli (strain K12).